Consider the following 122-residue polypeptide: Beta-2-microglobulin (122 aa).

An N-terminal signal peptide occupies residues 1-23; that stretch reads MFLRSTFVAALVACLAYIHLGDA. The 90-residue stretch at 28–117 folds into the Ig-like C1-type domain; it reads PKVQIYSRNV…STLREATRFT (90 aa). Cys-48 and Cys-103 are joined by a disulfide.

It belongs to the beta-2-microglobulin family. Heterodimer of an alpha chain and a beta chain. Beta-2-microglobulin is the beta-chain of major histocompatibility complex class I molecules.

The protein localises to the secreted. In terms of biological role, component of the class I major histocompatibility complex (MHC). Involved in the presentation of peptide antigens to the immune system. This chain is Beta-2-microglobulin (b2m), found in Acipenser baerii (Siberian sturgeon).